A 215-amino-acid polypeptide reads, in one-letter code: Cardiolipin synthase (CMP-forming) (215 aa).

Helical transmembrane passes span 29–49 (IPNI…WLIL), 60–80 (GWAL…GKLA), 117–137 (LWLT…VGIL), 158–178 (LMYA…ASLA), and 179–199 (AVFG…AGVL).

The protein belongs to the CDP-alcohol phosphatidyltransferase class-I family. It depends on a divalent metal cation as a cofactor.

It localises to the cell membrane. The enzyme catalyses a CDP-1,2-diacyl-sn-glycerol + a 1,2-diacyl-sn-glycero-3-phospho-(1'-sn-glycerol) = a cardiolipin + CMP + H(+). In terms of biological role, catalyzes the synthesis of cardiolipin (CL) (diphosphatidylglycerol) by specifically transferring a phosphatidyl group from CDP-diacylglycerol to phosphatidylglycerol (PG). The polypeptide is Cardiolipin synthase (CMP-forming) (Streptomyces coelicolor (strain ATCC BAA-471 / A3(2) / M145)).